We begin with the raw amino-acid sequence, 99 residues long: Glycine-rich protein (99 aa).

Residues 1–18 (MKSMIAVLLLALVATSMA) form the signal peptide.

Belongs to the non-disulfide-bridged peptide (NDBP) superfamily. Expressed by the venom gland.

It localises to the secreted. The sequence is that of Glycine-rich protein from Lychas mucronatus (Chinese swimming scorpion).